The primary structure comprises 148 residues: Isotocin-neurophysin IT 2 (148 aa).

Residues 1 to 20 (MSGSMSSVFSLLYLLSVCSA) form the signal peptide. The cysteines at positions 21 and 26 are disulfide-linked. G29 bears the Glycine amide mark. 7 disulfides stabilise this stretch: C42/C86, C45/C59, C53/C76, C60/C66, C93/C105, C99/C117, and C106/C111.

It belongs to the vasopressin/oxytocin family.

Its function is as follows. Isotocin causes contraction of smooth muscles. In Catostomus commersonii (White sucker), this protein is Isotocin-neurophysin IT 2.